Reading from the N-terminus, the 479-residue chain is NAC domain-containing protein 45 (479 aa).

Residues 6–157 form the NAC domain; sequence LPPGFRFHPT…AYALCRVFKK (152 aa). The DNA-binding element occupies 105 to 163; sequence IGTKKTLVYYRGRAPHGIRTGWVMHEYRLDETECEPSAYGMQDAYALCRVFKKIVIEAK.

In terms of tissue distribution, expressed in a few sieve element cells before enucleation and in phloem-pole pericycle cells.

It is found in the nucleus. Its function is as follows. Transcription factor directing sieve element enucleation and cytosol degradation. Not required for formation of lytic vacuoles. Regulates, with NAC086, the transcription of NEN1, NEN2, NEN3, NEN4, RTM1, RTM2, UBP16, PLDZETA, ABCB10 and At1g26450. This chain is NAC domain-containing protein 45, found in Arabidopsis thaliana (Mouse-ear cress).